The chain runs to 278 residues: MALKHYNPTSPARRGLILVDKSGLHKGKPVKALTEGKRKSGGRNNQGHATARGIAGGHKQKYRIVDFKRRKWDQPATVERLEYDPNRSAFIALVKYEDGELAYILAPQRLAAGDVVLAAKKTDTKPGNAMEIGQAPVGTIVHNVEMKPGKGGQIARAAGTYVQIVGRDKGMVMVRLNSGEQRYIRSDCMCTVGAVSNPDNANQNLAKAGRNRWLGRRPLTRGVAKNPVDHPHGGGEGRTSGGRHPVTPWGKPTKGARTRHNKATDKFIIRSRHAKKKR.

2 disordered regions span residues 28–56 (KPVKALTEGKRKSGGRNNQGHATARGIAG) and 221–278 (RGVA…KKKR). Basic residues predominate over residues 269–278 (IRSRHAKKKR).

Belongs to the universal ribosomal protein uL2 family. Part of the 50S ribosomal subunit. Forms a bridge to the 30S subunit in the 70S ribosome.

In terms of biological role, one of the primary rRNA binding proteins. Required for association of the 30S and 50S subunits to form the 70S ribosome, for tRNA binding and peptide bond formation. It has been suggested to have peptidyltransferase activity; this is somewhat controversial. Makes several contacts with the 16S rRNA in the 70S ribosome. The protein is Large ribosomal subunit protein uL2 of Rhizorhabdus wittichii (strain DSM 6014 / CCUG 31198 / JCM 15750 / NBRC 105917 / EY 4224 / RW1) (Sphingomonas wittichii).